The primary structure comprises 62 residues: Probable tautomerase SH1546 (62 aa).

The Proton acceptor; via imino nitrogen role is filled by P2.

Belongs to the 4-oxalocrotonate tautomerase family.

The chain is Probable tautomerase SH1546 from Staphylococcus haemolyticus (strain JCSC1435).